The following is a 757-amino-acid chain: MDVNPTLLFLKVPAQNAISTTFPYTGDPPYSHGTGTGYTMDTVNRTHQYSERGRWTTNTETGAPQLNPIDGPLPEDNEPSGYAQTDCVLEAMAFLEESHPGIFENSCIETMEVVQQTRVDKLTQGRQTYDWTLNRNQPAATALANTIEVFRSNGLTANESGRLIDFLKDVMESMDKEEMEITTHFQRKRRVRDNVTKKMVTQRTIGKRKQRLNKRSYLIRALTLNTMTKDAERGKLKRRAIATPGMQIRGFVYFVETLARSICEKLEQSGLPVGGNEKKAKLANVVRKMMTNSQDTEISFTITGDNTKWNENQNPRMFLAMITYMTRNQPEWFRNVLSIAPIMFSNKMARLGKGYMFESKSMKLRTQIPAEMLANIDLKYFNDSTRKKIERIRPLLIDGTASLSPGMMMGMFNMLSTVLGVSILNLGQKRYTKTTYWWDGLQSSDDFALIVNAPNHEGIQAGVDRFYRTCKLLGINMSKKKSYINRTGTFEFTSFFYRYGFVANFSMELPSFGVSGINESADMSIGVTVIKNNMINNDLGPATAQMALQLFIKDYRYTYRCHRGDTQIQTRRSFEIKKLWEQTRSKAGLLVSDGGPNLYNIRNLHIPEVCLKWELMDEDYQGRLCNPLNPFVSHKEIESVNNAVMMPAHGPAKNMEYDAVATTHSWIPKRNRSILNTSQRGILEDEQMYQRCCNLFEKFFPSSSYRRPVGISSMVEAMVSRARIDARIDFESGRIKKEEFTEIMKICSTIEELRRQK.

Residues 53–82 (GRWTTNTETGAPQLNPIDGPLPEDNEPSGY) are disordered. The segment covering 55–64 (WTTNTETGAP) has biased composition (polar residues). Short sequence motifs (nuclear localization signal) lie at residues 187 to 195 (RKRRVRDNV) and 203 to 216 (RTIG…NKRS). The segment at 249 to 256 (RGFVYFVE) is promoter-binding site. Positions 286-483 (VRKMMTNSQD…GINMSKKKSY (198 aa)) constitute a RdRp catalytic domain.

This sequence belongs to the influenza viruses polymerase PB1 family. Influenza RNA polymerase is composed of three subunits: PB1, PB2 and PA. Interacts (via N-terminus) with PA (via C-terminus). Interacts (via C-terminus) with PB2 (via N-terminus); this interaction is essential for transcription initiation. Interacts (via C-terminus) with human PKP2 (via N-terminus); the interaction competitively inhibits the interaction between the RNA polymerase subunits PB1 and PB2. Phosphorylated by host PRKCA.

The protein resides in the host nucleus. It is found in the host cytoplasm. The catalysed reaction is RNA(n) + a ribonucleoside 5'-triphosphate = RNA(n+1) + diphosphate. Functionally, RNA-dependent RNA polymerase which is responsible for replication and transcription of virus RNA segments. The transcription of viral mRNAs occurs by a unique mechanism called cap-snatching. 5' methylated caps of cellular mRNAs are cleaved after 10-13 nucleotides by PA. In turn, these short capped RNAs are used as primers by PB1 for transcription of viral mRNAs. During virus replication, PB1 initiates RNA synthesis and copy vRNA into complementary RNA (cRNA) which in turn serves as a template for the production of more vRNAs. This is RNA-directed RNA polymerase catalytic subunit from Influenza A virus (strain A/Hickox/1940 H1N1).